Here is a 348-residue protein sequence, read N- to C-terminus: Probable UDP-arabinopyranose mutase 5 (348 aa).

The DXD motif motif lies at 100–102 (DDD). An N-linked (Glc...) arginine glycan is attached at R148.

It belongs to the RGP family. As to quaternary structure, heteromers with RGP1 and RGP2. The cofactor is Mn(2+). Mg(2+) is required as a cofactor. In terms of processing, reversibly glycosylated in vitro by UDP-glucose, UDP-xylose and UDP-galactose, but not UDP-mannose. Widely expressed at low levels.

The protein resides in the cytoplasm. It localises to the cytosol. Its subcellular location is the golgi apparatus. The catalysed reaction is UDP-beta-L-arabinofuranose = UDP-beta-L-arabinopyranose. Probable UDP-L-arabinose mutase involved in the biosynthesis of cell wall non-cellulosic polysaccharides. The protein is Probable UDP-arabinopyranose mutase 5 of Arabidopsis thaliana (Mouse-ear cress).